The following is a 368-amino-acid chain: Ferrochelatase (368 aa).

Residues H209 and E290 each coordinate Fe cation. The segment at 341 to 368 is disordered; sequence ADLGGGREATGQAAERSRQRALALGAKQ.

This sequence belongs to the ferrochelatase family.

It is found in the cytoplasm. The enzyme catalyses heme b + 2 H(+) = protoporphyrin IX + Fe(2+). Its pathway is porphyrin-containing compound metabolism; protoheme biosynthesis; protoheme from protoporphyrin-IX: step 1/1. Catalyzes the ferrous insertion into protoporphyrin IX. This is Ferrochelatase from Nitrosococcus oceani (strain ATCC 19707 / BCRC 17464 / JCM 30415 / NCIMB 11848 / C-107).